The chain runs to 89 residues: Snake venom serine protease rhinocerase (89 aa).

Residues 1 to 89 (VIGGAECDIN…KVFDYIPWIK (89 aa)) form the Peptidase S1 domain. Asp-45 (charge relay system) is an active-site residue. Cys-64 and Cys-69 are joined by a disulfide.

The protein belongs to the peptidase S1 family. Snake venom subfamily. Post-translationally, glycosylated. Expressed by the venom gland.

The protein localises to the secreted. Its activity is regulated as follows. Inhibited by PMSF. Not inhibited by benzamidine. Its function is as follows. Snake venom serine protease that cleaves fibrinogen alpha and beta chains (FGA and FGB), but not gamma chains. Exhibits fibrinolytic and kininogenolytic. Preferentially cleaves after Arg and Lys residues. This is Snake venom serine protease rhinocerase from Bitis rhinoceros (West African gaboon viper).